The primary structure comprises 414 residues: Transforming growth factor beta-2 proprotein (414 aa).

Residues methionine 1 to leucine 19 form the signal peptide. N-linked (GlcNAc...) asparagine glycans are attached at residues asparagine 72, asparagine 140, and asparagine 241. Intrachain disulfides connect cysteine 309/cysteine 318, cysteine 317/cysteine 380, cysteine 346/cysteine 411, and cysteine 350/cysteine 413.

The protein belongs to the TGF-beta family. In terms of assembly, interacts with the serine proteases, HTRA1 and HTRA3. Interacts with ASPN. Interacts with MFAP5. Interacts with Transforming growth factor beta-2 (TGF-beta-2) chain; interaction is non-covalent and maintains (TGF-beta-2) in a latent state. Interacts with LRRC32/GARP; leading to regulate activation of TGF-beta-2. Interacts with NREP; the interaction results in a decrease in TGFB2 autoinduction. As to quaternary structure, transforming growth factor beta-2: Homodimer; disulfide-linked. Transforming growth factor beta-2: Interacts with TGF-beta receptors (TGFBR1 and TGFBR2), leading to signal transduction. The precursor proprotein is cleaved in the Golgi apparatus to form Transforming growth factor beta-2 (TGF-beta-2) and Latency-associated peptide (LAP) chains, which remain non-covalently linked, rendering TGF-beta-2 inactive.

It is found in the secreted. The protein localises to the extracellular space. The protein resides in the extracellular matrix. Functionally, precursor of the Latency-associated peptide (LAP) and Transforming growth factor beta-2 (TGF-beta-2) chains, which constitute the regulatory and active subunit of TGF-beta-2, respectively. In terms of biological role, required to maintain the Transforming growth factor beta-2 (TGF-beta-2) chain in a latent state during storage in extracellular matrix. Associates non-covalently with TGF-beta-2 and regulates its activation via interaction with 'milieu molecules', such as LTBP1 and LRRC32/GARP, that control activation of TGF-beta-2. Its function is as follows. Multifunctional protein that regulates various processes such as angiogenesis and heart development. Activation into mature form follows different steps: following cleavage of the proprotein in the Golgi apparatus, Latency-associated peptide (LAP) and Transforming growth factor beta-2 (TGF-beta-2) chains remain non-covalently linked rendering TGF-beta-2 inactive during storage in extracellular matrix. At the same time, LAP chain interacts with 'milieu molecules', such as LTBP1 and LRRC32/GARP, that control activation of TGF-beta-2 and maintain it in a latent state during storage in extracellular milieus. Once activated following release of LAP, TGF-beta-2 acts by binding to TGF-beta receptors (TGFBR1 and TGFBR2), which transduce signal. The protein is Transforming growth factor beta-2 proprotein (TGFB2) of Chlorocebus aethiops (Green monkey).